Reading from the N-terminus, the 338-residue chain is Ferrochelatase (338 aa).

Fe cation is bound by residues histidine 189 and glutamate 294.

It belongs to the ferrochelatase family.

Its subcellular location is the cytoplasm. The catalysed reaction is heme b + 2 H(+) = protoporphyrin IX + Fe(2+). It functions in the pathway porphyrin-containing compound metabolism; protoheme biosynthesis; protoheme from protoporphyrin-IX: step 1/1. Functionally, catalyzes the ferrous insertion into protoporphyrin IX. This chain is Ferrochelatase, found in Pseudomonas putida (strain ATCC 700007 / DSM 6899 / JCM 31910 / BCRC 17059 / LMG 24140 / F1).